The chain runs to 260 residues: Homeobox protein Hox-D11b (260 aa).

The span at 1-14 shows a compositional bias: low complexity; the sequence is MFSSSFSYPSKTSP. Disordered regions lie at residues 1–21 and 151–206; these read MFSS…PFLA and ITPG…CTRR. The segment covering 167-179 has biased composition (basic and acidic residues); the sequence is RSPDGESSEERAG. The segment at residues 205–260 is a DNA-binding region (homeobox; truncated); that stretch reads RRKKRCPYSKQQIIELEREFLFNIYINKDRRMQLSHLLRLTDRCVNNPLNQDSFFT.

The protein belongs to the Abd-B homeobox family.

The protein localises to the nucleus. Its function is as follows. Sequence-specific transcription factor which is part of a developmental regulatory system that provides cells with specific positional identities on the anterior-posterior axis. The protein is Homeobox protein Hox-D11b (hoxd11b) of Takifugu rubripes (Japanese pufferfish).